Consider the following 160-residue polypeptide: SsrA-binding protein (160 aa).

The segment at 136–160 (KRDTVRERDSNRELQRAVRNKGKED) is disordered.

It belongs to the SmpB family.

Its subcellular location is the cytoplasm. Functionally, required for rescue of stalled ribosomes mediated by trans-translation. Binds to transfer-messenger RNA (tmRNA), required for stable association of tmRNA with ribosomes. tmRNA and SmpB together mimic tRNA shape, replacing the anticodon stem-loop with SmpB. tmRNA is encoded by the ssrA gene; the 2 termini fold to resemble tRNA(Ala) and it encodes a 'tag peptide', a short internal open reading frame. During trans-translation Ala-aminoacylated tmRNA acts like a tRNA, entering the A-site of stalled ribosomes, displacing the stalled mRNA. The ribosome then switches to translate the ORF on the tmRNA; the nascent peptide is terminated with the 'tag peptide' encoded by the tmRNA and targeted for degradation. The ribosome is freed to recommence translation, which seems to be the essential function of trans-translation. The chain is SsrA-binding protein from Pseudomonas putida (strain W619).